A 434-amino-acid chain; its full sequence is Trigger factor (434 aa).

The PPIase FKBP-type domain maps to 160-245 (GDKVKMNFVG…LTEVQAANLP (86 aa)).

Belongs to the FKBP-type PPIase family. Tig subfamily.

It localises to the cytoplasm. It carries out the reaction [protein]-peptidylproline (omega=180) = [protein]-peptidylproline (omega=0). Involved in protein export. Acts as a chaperone by maintaining the newly synthesized protein in an open conformation. Functions as a peptidyl-prolyl cis-trans isomerase. The polypeptide is Trigger factor (Shewanella sp. (strain W3-18-1)).